Reading from the N-terminus, the 222-residue chain is Elongation factor 1-beta' (222 aa).

Residues 71–113 (SQGTSPLTAGAKPTAPAPAAKDDDDDDVDLFGSGDEEEDAEAE) are disordered. The segment covering 78 to 89 (TAGAKPTAPAPA) has biased composition (low complexity). The span at 92–111 (DDDDDDVDLFGSGDEEEDAE) shows a compositional bias: acidic residues.

It belongs to the EF-1-beta/EF-1-delta family. In terms of assembly, EF-1 is composed of 4 subunits: alpha, beta, beta' and gamma. Post-translationally, phosphorylated.

Its function is as follows. EF-1-beta and EF-1-beta' stimulate the exchange of GDP bound to EF-1-alpha to GTP. This chain is Elongation factor 1-beta', found in Bombyx mori (Silk moth).